The following is a 718-amino-acid chain: Ribosomal RNA large subunit methyltransferase K/L (718 aa).

The THUMP domain maps to 44-155 (DAYKVCIYSH…KQYVNVFLCL (112 aa)).

The protein belongs to the methyltransferase superfamily. RlmKL family.

The protein localises to the cytoplasm. It catalyses the reaction guanosine(2445) in 23S rRNA + S-adenosyl-L-methionine = N(2)-methylguanosine(2445) in 23S rRNA + S-adenosyl-L-homocysteine + H(+). The catalysed reaction is guanosine(2069) in 23S rRNA + S-adenosyl-L-methionine = N(2)-methylguanosine(2069) in 23S rRNA + S-adenosyl-L-homocysteine + H(+). Functionally, specifically methylates the guanine in position 2445 (m2G2445) and the guanine in position 2069 (m7G2069) of 23S rRNA. The sequence is that of Ribosomal RNA large subunit methyltransferase K/L from Francisella philomiragia subsp. philomiragia (strain ATCC 25017 / CCUG 19701 / FSC 153 / O#319-036).